The following is a 1038-amino-acid chain: Importin-7 (1038 aa).

Residue Met1 is modified to N-acetylmethionine. Positions 22-101 (AERQLNEAHK…RENIVEAIIH (80 aa)) constitute an Importin N-terminal domain. Residues 881 to 910 (EHENDSDDDEDAEDDDETEELGSDEDDIDE) form a disordered region. A compositionally biased stretch (acidic residues) spans 884–910 (NDSDDDEDAEDDDETEELGSDEDDIDE). The residue at position 886 (Ser886) is a Phosphoserine. At Thr898 the chain carries Phosphothreonine. A phosphoserine mark is found at Ser903 and Ser1020.

Belongs to the importin beta family. As to quaternary structure, forms a heterodimer with KPNB1. Interacts with histone H1. Interacts with H2A, H2B, H3 and H4 histones. Interacts with SNUPN and XPO1. Interacts with RPS7 and RPL5. Interacts with RPL23A (via BIB domain). Binds directly to nuclear pore complexes. Interacts with SMAD4 and NUP93; translocates SMAD4 to the nucleus through the NPC upon BMP7 stimulation resulting in activation of SMAD4 signaling. Interacts with phosphorylated SMAD2; the interaction facilitates translocation of SMAD2 to the nucleus. Interacts with SRP19. Interacts with RUNX2; the interaction inhibits RUNX2 nuclear translocation in osteoblasts. Interacts with HDAC6, DLX3 and KLF4; the interaction facilitates HDAC6, DLX3 and KLF4 nuclear translocation in dental papilla cells.

Its subcellular location is the cytoplasm. It is found in the nucleus. Functionally, functions in nuclear protein import, either by acting as autonomous nuclear transport receptor or as an adapter-like protein in association with the importin-beta subunit KPNB1. Acting autonomously is thought to serve itself as receptor for nuclear localization signals (NLS) and to promote translocation of import substrates through the nuclear pore complex (NPC) by an energy requiring, Ran-dependent mechanism. At the nucleoplasmic side of the NPC, Ran binds to importin, the importin/substrate complex dissociates and importin is re-exported from the nucleus to the cytoplasm where GTP hydrolysis releases Ran. Mediates autonomously the nuclear import of ribosomal proteins RPL23A, RPS7 and RPL5. In association with KPNB1 mediates the nuclear import of H1 histone and the Ran-binding site of IPO7 is not required but synergizes with that of KPNB1 in importin/substrate complex dissociation. Promotes odontoblast differentiation via promoting nuclear translocation of DLX3, KLF4, SMAD2, thereby facilitating the transcription of target genes that play a role in odontoblast differentiation. Facilitates BMP4-induced translocation of SMAD1 to the nucleus and recruitment to the MSX1 gene promoter, thereby promotes the expression of the odontogenic regulator MSX1 in dental mesenchymal cells. Also promotes odontoblast differentiation by facilitating the nuclear translocation of HDAC6 and subsequent repression of RUNX2 expression. Inhibits osteoblast differentiation by inhibiting nuclear translocation of RUNX2 and therefore inhibition of RUNX2 target gene transcription. In vitro, mediates nuclear import of H2A, H2B, H3 and H4 histones. In Mus musculus (Mouse), this protein is Importin-7 (Ipo7).